Reading from the N-terminus, the 471-residue chain is Bifunctional protein GlmU (471 aa).

The interval 1-232 (MSDITAVLLA…EEDALAPNDR (232 aa)) is pyrophosphorylase. UDP-N-acetyl-alpha-D-glucosamine-binding positions include 9-12 (LAAG), lysine 23, glutamine 73, 78-79 (GT), 102-104 (YGD), glycine 141, glutamate 157, and asparagine 230. Aspartate 104 contacts Mg(2+). Asparagine 230 is a Mg(2+) binding site. Positions 233 to 253 (VELARAEARLRRQINERHMRN) are linker. The N-acetyltransferase stretch occupies residues 254–471 (GVTIINPDAT…RQRKMNREGT (218 aa)). Residues arginine 335 and lysine 353 each contribute to the UDP-N-acetyl-alpha-D-glucosamine site. Histidine 365 functions as the Proton acceptor in the catalytic mechanism. UDP-N-acetyl-alpha-D-glucosamine-binding residues include tyrosine 368 and asparagine 379. Residues alanine 382, 388–389 (NY), alanine 425, and arginine 444 contribute to the acetyl-CoA site.

In the N-terminal section; belongs to the N-acetylglucosamine-1-phosphate uridyltransferase family. It in the C-terminal section; belongs to the transferase hexapeptide repeat family. Homotrimer. It depends on Mg(2+) as a cofactor.

Its subcellular location is the cytoplasm. The catalysed reaction is alpha-D-glucosamine 1-phosphate + acetyl-CoA = N-acetyl-alpha-D-glucosamine 1-phosphate + CoA + H(+). It catalyses the reaction N-acetyl-alpha-D-glucosamine 1-phosphate + UTP + H(+) = UDP-N-acetyl-alpha-D-glucosamine + diphosphate. It participates in nucleotide-sugar biosynthesis; UDP-N-acetyl-alpha-D-glucosamine biosynthesis; N-acetyl-alpha-D-glucosamine 1-phosphate from alpha-D-glucosamine 6-phosphate (route II): step 2/2. The protein operates within nucleotide-sugar biosynthesis; UDP-N-acetyl-alpha-D-glucosamine biosynthesis; UDP-N-acetyl-alpha-D-glucosamine from N-acetyl-alpha-D-glucosamine 1-phosphate: step 1/1. It functions in the pathway bacterial outer membrane biogenesis; LPS lipid A biosynthesis. In terms of biological role, catalyzes the last two sequential reactions in the de novo biosynthetic pathway for UDP-N-acetylglucosamine (UDP-GlcNAc). The C-terminal domain catalyzes the transfer of acetyl group from acetyl coenzyme A to glucosamine-1-phosphate (GlcN-1-P) to produce N-acetylglucosamine-1-phosphate (GlcNAc-1-P), which is converted into UDP-GlcNAc by the transfer of uridine 5-monophosphate (from uridine 5-triphosphate), a reaction catalyzed by the N-terminal domain. The protein is Bifunctional protein GlmU of Symbiobacterium thermophilum (strain DSM 24528 / JCM 14929 / IAM 14863 / T).